Consider the following 139-residue polypeptide: Large ribosomal subunit protein uL16 (139 aa).

The disordered stretch occupies residues 1–21; it reads MLMPKRVQYRKTQRGRMKGNA. Residues 7–17 show a composition bias toward basic residues; sequence VQYRKTQRGRM.

This sequence belongs to the universal ribosomal protein uL16 family. Part of the 50S ribosomal subunit.

Functionally, binds 23S rRNA and is also seen to make contacts with the A and possibly P site tRNAs. The chain is Large ribosomal subunit protein uL16 from Chlorobaculum tepidum (strain ATCC 49652 / DSM 12025 / NBRC 103806 / TLS) (Chlorobium tepidum).